The sequence spans 80 residues: MSCCGGNCGCGSGCKCGNGCGGCKMYPDMSFSEKTTTETLVLGVGAEKAHFEGGEMGVVGAEEGGCKCGDNCTCNPCTCK.

This sequence belongs to the metallothionein superfamily. Type 15 family.

Functionally, metallothioneins have a high content of cysteine residues that bind various heavy metals. The protein is Metallothionein-like protein type 2 (MTI) of Ricinus communis (Castor bean).